We begin with the raw amino-acid sequence, 529 residues long: Bifunctional purine biosynthesis protein PurH (529 aa).

The region spanning 1 to 148 (MQQRRPVRRA…KNHKDVAIVV (148 aa)) is the MGS-like domain. Lys287 bears the N6-acetyllysine mark.

This sequence belongs to the PurH family.

The catalysed reaction is (6R)-10-formyltetrahydrofolate + 5-amino-1-(5-phospho-beta-D-ribosyl)imidazole-4-carboxamide = 5-formamido-1-(5-phospho-D-ribosyl)imidazole-4-carboxamide + (6S)-5,6,7,8-tetrahydrofolate. It catalyses the reaction IMP + H2O = 5-formamido-1-(5-phospho-D-ribosyl)imidazole-4-carboxamide. It participates in purine metabolism; IMP biosynthesis via de novo pathway; 5-formamido-1-(5-phospho-D-ribosyl)imidazole-4-carboxamide from 5-amino-1-(5-phospho-D-ribosyl)imidazole-4-carboxamide (10-formyl THF route): step 1/1. Its pathway is purine metabolism; IMP biosynthesis via de novo pathway; IMP from 5-formamido-1-(5-phospho-D-ribosyl)imidazole-4-carboxamide: step 1/1. The polypeptide is Bifunctional purine biosynthesis protein PurH (Escherichia coli (strain 55989 / EAEC)).